The following is a 346-amino-acid chain: UDP-N-acetylenolpyruvoylglucosamine reductase (346 aa).

Positions 17–187 (IESQAYALIE…VAVGFTLKKE (171 aa)) constitute an FAD-binding PCMH-type domain. R163 is a catalytic residue. S233 functions as the Proton donor in the catalytic mechanism. Residue E329 is part of the active site.

It belongs to the MurB family. The cofactor is FAD.

The protein localises to the cytoplasm. The enzyme catalyses UDP-N-acetyl-alpha-D-muramate + NADP(+) = UDP-N-acetyl-3-O-(1-carboxyvinyl)-alpha-D-glucosamine + NADPH + H(+). It participates in cell wall biogenesis; peptidoglycan biosynthesis. Functionally, cell wall formation. In Photobacterium profundum (strain SS9), this protein is UDP-N-acetylenolpyruvoylglucosamine reductase.